The chain runs to 275 residues: Large ribosomal subunit protein uL2 (275 aa).

Disordered regions lie at residues 36 to 55 and 224 to 263; these read GLTG…RRMG and VVMN…RQNK.

It belongs to the universal ribosomal protein uL2 family. In terms of assembly, part of the 50S ribosomal subunit. Forms a bridge to the 30S subunit in the 70S ribosome.

Its function is as follows. One of the primary rRNA binding proteins. Required for association of the 30S and 50S subunits to form the 70S ribosome, for tRNA binding and peptide bond formation. It has been suggested to have peptidyltransferase activity; this is somewhat controversial. Makes several contacts with the 16S rRNA in the 70S ribosome. The polypeptide is Large ribosomal subunit protein uL2 (Rhodospirillum centenum (strain ATCC 51521 / SW)).